A 269-amino-acid chain; its full sequence is Hydroxyethylthiazole kinase (269 aa).

Met-46 serves as a coordination point for substrate. Arg-121 and Thr-166 together coordinate ATP. Residue Gly-193 coordinates substrate.

Belongs to the Thz kinase family. Mg(2+) serves as cofactor.

It catalyses the reaction 5-(2-hydroxyethyl)-4-methylthiazole + ATP = 4-methyl-5-(2-phosphooxyethyl)-thiazole + ADP + H(+). The protein operates within cofactor biosynthesis; thiamine diphosphate biosynthesis; 4-methyl-5-(2-phosphoethyl)-thiazole from 5-(2-hydroxyethyl)-4-methylthiazole: step 1/1. Its function is as follows. Catalyzes the phosphorylation of the hydroxyl group of 4-methyl-5-beta-hydroxyethylthiazole (THZ). In Limosilactobacillus reuteri (strain DSM 20016) (Lactobacillus reuteri), this protein is Hydroxyethylthiazole kinase.